A 638-amino-acid chain; its full sequence is tRNA uridine 5-carboxymethylaminomethyl modification enzyme MnmG (638 aa).

Residues 15-20 (GAGHAG), I127, and S182 contribute to the FAD site. NAD(+) is bound at residue 276-290 (GPRYCPSIEDKIVRF). An FAD-binding site is contributed by Q373.

This sequence belongs to the MnmG family. Homodimer. Heterotetramer of two MnmE and two MnmG subunits. FAD is required as a cofactor.

The protein localises to the cytoplasm. In terms of biological role, NAD-binding protein involved in the addition of a carboxymethylaminomethyl (cmnm) group at the wobble position (U34) of certain tRNAs, forming tRNA-cmnm(5)s(2)U34. In Streptococcus suis (strain 98HAH33), this protein is tRNA uridine 5-carboxymethylaminomethyl modification enzyme MnmG.